Consider the following 413-residue polypeptide: Cell division protein FtsZ 2 (413 aa).

GTP is bound by residues 130 to 132 (GTG), Glu169, Arg173, and Asp216.

It belongs to the FtsZ family. Homodimer. Polymerizes to form a dynamic ring structure in a strictly GTP-dependent manner. Interacts directly with several other division proteins.

The protein resides in the cytoplasm. Functionally, essential cell division protein that forms a contractile ring structure (Z ring) at the future cell division site. The regulation of the ring assembly controls the timing and the location of cell division. One of the functions of the FtsZ ring is to recruit other cell division proteins to the septum to produce a new cell wall between the dividing cells. Binds GTP and shows GTPase activity. The polypeptide is Cell division protein FtsZ 2 (Pyrococcus abyssi (strain GE5 / Orsay)).